We begin with the raw amino-acid sequence, 147 residues long: Transcriptional regulator FurA (147 aa).

Positions 1–85 (MSSIPDYAEQ…GSVARYESRV (85 aa)) are DNA-binding. Residues H34 and E82 each contribute to the Zn(2+) site. Positions 86-147 (GDNHHHIVCR…SISDTSRSHP (62 aa)) are dimerization. Positions 87 and 89 each coordinate Fe cation. H91, C94, C97, and D102 together coordinate Zn(2+). Position 109 (E109) interacts with Fe cation.

It belongs to the Fur family. Homodimer.

It localises to the cytoplasm. Functionally, represses transcription of the catalase-peroxidase gene katG and its own transcription by binding to the promoter region in a redox-dependent manner. The protein is Transcriptional regulator FurA (furA) of Mycobacterium bovis (strain ATCC BAA-935 / AF2122/97).